The primary structure comprises 141 residues: Hemoglobin subunit alpha-1/2 (141 aa).

In terms of domain architecture, Globin spans 1 to 141 (VLSPADKTNV…VSTVLTSKYR (141 aa)). Ser-3 bears the Phosphoserine mark. Lys-7 carries the post-translational modification N6-succinyllysine. Thr-8 is subject to Phosphothreonine. Lys-11 is subject to N6-succinyllysine. Residue Lys-16 is modified to N6-acetyllysine; alternate. At Lys-16 the chain carries N6-succinyllysine; alternate. Tyr-24 bears the Phosphotyrosine mark. Residue Ser-35 is modified to Phosphoserine. Lys-40 carries the post-translational modification N6-succinyllysine. Ser-49 carries the post-translational modification Phosphoserine. His-58 provides a ligand contact to O2. His-87 serves as a coordination point for heme b. Ser-102 is modified (phosphoserine). Thr-108 bears the Phosphothreonine mark. Residues Ser-124 and Ser-131 each carry the phosphoserine modification. 2 positions are modified to phosphothreonine: Thr-134 and Thr-137. Ser-138 is subject to Phosphoserine.

It belongs to the globin family. As to quaternary structure, heterotetramer of two alpha chains and two beta chains. Red blood cells.

In terms of biological role, involved in oxygen transport from the lung to the various peripheral tissues. This chain is Hemoglobin subunit alpha-1/2, found in Macaca speciosa (Stump-tail macaque).